Here is a 475-residue protein sequence, read N- to C-terminus: Trifunctional enzyme subunit beta, mitochondrial (475 aa).

Residues 1 to 34 (MTTILTYPFKNLPTASKWALRFSIRPLSCSSQLR) constitute a mitochondrion transit peptide. Lys-73 carries the N6-acetyllysine; alternate modification. The residue at position 73 (Lys-73) is an N6-succinyllysine; alternate. The active-site Acyl-thioester intermediate is Cys-139. An intramembrane segment occupies 174–221 (IRHSRKMRKLMLDLNKAKSMGQRLSLISKFRFNFLAPELPAVSEFSTS). Lys-189 bears the N6-acetyllysine; alternate mark. At Lys-189 the chain carries N6-succinyllysine; alternate. An N6-succinyllysine mark is found at Lys-191, Lys-273, and Lys-292. N6-acetyllysine; alternate is present on Lys-294. An N6-succinyllysine; alternate modification is found at Lys-294. Position 299 is an N6-acetyllysine (Lys-299). At Lys-333 the chain carries N6-acetyllysine; alternate. Lys-333 is subject to N6-succinyllysine; alternate. Lys-349 and Lys-362 each carry N6-acetyllysine. The Proton donor/acceptor role is filled by Cys-459.

The protein belongs to the thiolase-like superfamily. Thiolase family. In terms of assembly, heterotetramer of 2 alpha/HADHA and 2 beta/HADHB subunits; forms the mitochondrial trifunctional enzyme. Also purified as higher order heterooligomers including a 4 alpha/HADHA and 4 beta/HADHB heterooligomer which physiological significance remains unclear. The mitochondrial trifunctional enzyme interacts with MTLN. Interacts with RSAD2/viperin.

The protein localises to the mitochondrion. It localises to the mitochondrion inner membrane. Its subcellular location is the mitochondrion outer membrane. It is found in the endoplasmic reticulum. The catalysed reaction is an acyl-CoA + acetyl-CoA = a 3-oxoacyl-CoA + CoA. It carries out the reaction butanoyl-CoA + acetyl-CoA = 3-oxohexanoyl-CoA + CoA. It catalyses the reaction hexanoyl-CoA + acetyl-CoA = 3-oxooctanoyl-CoA + CoA. The enzyme catalyses octanoyl-CoA + acetyl-CoA = 3-oxodecanoyl-CoA + CoA. The catalysed reaction is decanoyl-CoA + acetyl-CoA = 3-oxododecanoyl-CoA + CoA. It carries out the reaction dodecanoyl-CoA + acetyl-CoA = 3-oxotetradecanoyl-CoA + CoA. It catalyses the reaction tetradecanoyl-CoA + acetyl-CoA = 3-oxohexadecanoyl-CoA + CoA. The protein operates within lipid metabolism; fatty acid beta-oxidation. Functionally, mitochondrial trifunctional enzyme catalyzes the last three of the four reactions of the mitochondrial beta-oxidation pathway. The mitochondrial beta-oxidation pathway is the major energy-producing process in tissues and is performed through four consecutive reactions breaking down fatty acids into acetyl-CoA. Among the enzymes involved in this pathway, the trifunctional enzyme exhibits specificity for long-chain fatty acids. Mitochondrial trifunctional enzyme is a heterotetrameric complex composed of two proteins, the trifunctional enzyme subunit alpha/HADHA carries the 2,3-enoyl-CoA hydratase and the 3-hydroxyacyl-CoA dehydrogenase activities, while the trifunctional enzyme subunit beta/HADHB described here bears the 3-ketoacyl-CoA thiolase activity. This chain is Trifunctional enzyme subunit beta, mitochondrial (HADHB), found in Pan troglodytes (Chimpanzee).